We begin with the raw amino-acid sequence, 1476 residues long: ABC transporter G family member 17 (1476 aa).

Disordered regions lie at residues 13-45 (SENNNNNNNNNNNNNNNNNNNLNNNNDNDYDYD) and 68-91 (FREIDGGKNNNNHDIELGERKPEN). The stretch at 14-67 (ENNNNNNNNNNNNNNNNNNNLNNNNDNDYDYDSINNIEEKFENVSKELEGQSIK) forms a coiled coil. Over residues 15 to 39 (NNNNNNNNNNNNNNNNNNNLNNNND) the composition is skewed to low complexity. The ABC transporter 1 domain maps to 151 to 402 (LNPFNYFKKD…FLDLGFDCEP (252 aa)). The ABC transmembrane type-2 1 domain maps to 507 to 751 (WGDKFTLTSR…SLSVKGENYL (245 aa)). 5 helical membrane passes run 517–537 (FLTILVLSFIFGGIYFQQPLT), 547–567 (AIFTSIIFNCILTQGELHGAL), 592–612 (ILIDIPFILVQVFLHSFIVYF), 623–643 (FFIFCFTLVGVSLSSASLFRG), and 764–784 (LNVVVIFLFWLFYIGLNLFAV). The region spanning 838–1082 (FSWKSISYTV…LTSYFERHGV (245 aa)) is the ABC transporter 2 domain. ATP is bound at residue 874 to 881 (GSSGAGKT). Transmembrane regions (helical) follow at residues 1182-1202 (FYTMGSFAQSAVSGLVIGFTF), 1219-1239 (SWEAMILGVLLIYLVLPMFFI), 1260-1280 (LSMIAVEIPYVVLSSTLFFIA), 1298-1318 (WLMHTMFSVYIVSFAQALGAA), 1322-1342 (IAISIAALPIVLFYLFLLCGV), and 1450-1470 (FGIIVAYWGSSILAVLFFVYL). Residues 1182–1405 (FYTMGSFAQS…TDCQTYSAPF (224 aa)) enclose the ABC transmembrane type-2 2 domain.

Belongs to the ABC transporter superfamily. ABCG family. PDR (TC 3.A.1.205) subfamily.

Its subcellular location is the membrane. This chain is ABC transporter G family member 17 (abcG17-1), found in Dictyostelium discoideum (Social amoeba).